A 313-amino-acid polypeptide reads, in one-letter code: Protein PALE CRESS, chloroplastic (313 aa).

The N-terminal 22 residues, 1–22, are a transit peptide targeting the chloroplast; sequence MAATSLVLTCASPLFSSPRVIS.

In terms of tissue distribution, expressed in green tissues, including leaves. Accumulates in chloroplasts of mature stomatal guard cells.

It localises to the plastid. The protein localises to the chloroplast. It is found in the chromoplast. Its subcellular location is the etioplast. The protein resides in the amyloplast. Required for the differentiation of chloroplast from proplastids or etioplasts, probably by modulating some chloroplast-encoded genes expression and mRNA maturation. Involved in leaf-cells differentiation. This Arabidopsis thaliana (Mouse-ear cress) protein is Protein PALE CRESS, chloroplastic (PAC).